An 819-amino-acid polypeptide reads, in one-letter code: Glycine-rich domain-containing protein 1 (819 aa).

In terms of biological role, plays a regulatory role in abscisic acid (ABA) signaling and tolerance to abiotic stress during germination. May be involved in the regulation of the ABI transcriptional factors. The sequence is that of Glycine-rich domain-containing protein 1 from Arabidopsis thaliana (Mouse-ear cress).